Reading from the N-terminus, the 85-residue chain is U5-theraphotoxin-Hhn1a (85 aa).

Residues 1–21 (MKSQIFFAVAALFLLTVRTYA) form the signal peptide. A propeptide spanning residues 22–49 (SKSKEQDLRDALFSAMFSADNQLNPQER) is cleaved from the precursor. Disulfide bonds link Cys-51/Cys-65, Cys-58/Cys-70, and Cys-64/Cys-77.

This sequence belongs to the neurotoxin 10 (Hwtx-1) family. 18 (Hntx-VII) subfamily. Expressed by the venom gland.

It localises to the secreted. Functionally, ion channel impairing toxin that inhibits voltage-gated sodium channels. The recombinantly expressed toxin shows a weak activity against Nav1.7/SCN9A, and shifts the voltage dependence of channel activation to more depolarized potentials. The chain is U5-theraphotoxin-Hhn1a from Cyriopagopus hainanus (Chinese bird spider).